Consider the following 448-residue polypeptide: Asparagine--tRNA ligase (448 aa).

The protein belongs to the class-II aminoacyl-tRNA synthetase family. Homodimer.

It localises to the cytoplasm. The enzyme catalyses tRNA(Asn) + L-asparagine + ATP = L-asparaginyl-tRNA(Asn) + AMP + diphosphate + H(+). This Streptococcus pyogenes serotype M2 (strain MGAS10270) protein is Asparagine--tRNA ligase.